Here is a 193-residue protein sequence, read N- to C-terminus: Ion-translocating oxidoreductase complex subunit A (193 aa).

A run of 6 helical transmembrane segments spans residues 5-25, 39-59, 63-83, 102-122, 134-154, and 171-191; these read LLLLIGTVLVNNFVLVKFLGL, IGMGLATTFVLTLASVCSYLI, ILAPLGIEYLRTMSFILVIAV, VLGIFLPLITTNCAVLGVALL, IIYGFGAAVGFSLVLILFSAM, and SIAMITAGLMSLAFMGFTGLV.

This sequence belongs to the NqrDE/RnfAE family. As to quaternary structure, the complex is composed of six subunits: RnfA, RnfB, RnfC, RnfD, RnfE and RnfG.

It localises to the cell inner membrane. Functionally, part of a membrane-bound complex that couples electron transfer with translocation of ions across the membrane. The polypeptide is Ion-translocating oxidoreductase complex subunit A (Aliivibrio salmonicida (strain LFI1238) (Vibrio salmonicida (strain LFI1238))).